The sequence spans 267 residues: tRNA pseudouridine synthase A (267 aa).

The Nucleophile role is filled by Asp51. Tyr109 provides a ligand contact to substrate.

It belongs to the tRNA pseudouridine synthase TruA family. In terms of assembly, homodimer.

The catalysed reaction is uridine(38/39/40) in tRNA = pseudouridine(38/39/40) in tRNA. Its function is as follows. Formation of pseudouridine at positions 38, 39 and 40 in the anticodon stem and loop of transfer RNAs. This is tRNA pseudouridine synthase A from Staphylococcus saprophyticus subsp. saprophyticus (strain ATCC 15305 / DSM 20229 / NCIMB 8711 / NCTC 7292 / S-41).